Consider the following 502-residue polypeptide: Glycerol kinase (502 aa).

Residue Thr-14 participates in ADP binding. Thr-14, Thr-15, and Ser-16 together coordinate ATP. Thr-14 is a binding site for sn-glycerol 3-phosphate. Arg-18 is an ADP binding site. 4 residues coordinate sn-glycerol 3-phosphate: Arg-84, Glu-85, Tyr-136, and Asp-246. Arg-84, Glu-85, Tyr-136, Asp-246, and Gln-247 together coordinate glycerol. 2 residues coordinate ADP: Thr-268 and Gly-311. Residues Thr-268, Gly-311, Gln-315, and Gly-412 each coordinate ATP. Positions 412 and 416 each coordinate ADP.

The protein belongs to the FGGY kinase family. Homotetramer and homodimer (in equilibrium). Heterodimer with EIIA-Glc. Binds 1 zinc ion per glycerol kinase EIIA-Glc dimer. The zinc ion is important for dimerization.

The enzyme catalyses glycerol + ATP = sn-glycerol 3-phosphate + ADP + H(+). It participates in polyol metabolism; glycerol degradation via glycerol kinase pathway; sn-glycerol 3-phosphate from glycerol: step 1/1. Activity of this regulatory enzyme is affected by several metabolites. Allosterically and non-competitively inhibited by fructose 1,6-bisphosphate (FBP) and unphosphorylated phosphocarrier protein EIIA-Glc (III-Glc), an integral component of the bacterial phosphotransferase (PTS) system. Functionally, key enzyme in the regulation of glycerol uptake and metabolism. Catalyzes the phosphorylation of glycerol to yield sn-glycerol 3-phosphate. The protein is Glycerol kinase of Enterobacter sp. (strain 638).